We begin with the raw amino-acid sequence, 618 residues long: Glutathione-regulated potassium-efflux system protein (618 aa).

12 consecutive transmembrane segments (helical) span residues 6-26 (NPEL…VPLF), 32-52 (GSVL…FGIV), 55-75 (PTAV…IIGL), 94-114 (LLQV…LLGL), 118-138 (VSFI…MQSL), 152-172 (VIST…SVAF), 186-206 (WVSI…GKWL), 227-247 (ALLV…SMAM), 274-294 (GLLL…HLVF), 298-318 (ILLL…VYII), 336-356 (MAHG…AEVI), and 362-382 (ATFT…AQIA). The RCK N-terminal domain occupies 409-525 (EDNVLVIGFG…LIKQDVDFIV (117 aa)).

The protein belongs to the monovalent cation:proton antiporter 2 (CPA2) transporter (TC 2.A.37) family.

It is found in the cell inner membrane. Its function is as follows. Transport system that facilitate potassium-efflux, possibly by potassium-proton antiport. The protein is Glutathione-regulated potassium-efflux system protein (kefBC) of Haemophilus influenzae (strain ATCC 51907 / DSM 11121 / KW20 / Rd).